Consider the following 466-residue polypeptide: Fumarate hydratase class II (466 aa).

Residues Ser99–Thr101, His129–Asp132, Ser139–Asn141, and Thr187 each bind substrate. The active-site Proton donor/acceptor is His188. The active site involves Ser318. Residues Ser319 and Lys324–Asn326 each bind substrate.

The protein belongs to the class-II fumarase/aspartase family. Fumarase subfamily. As to quaternary structure, homotetramer.

It localises to the cytoplasm. The enzyme catalyses (S)-malate = fumarate + H2O. It participates in carbohydrate metabolism; tricarboxylic acid cycle; (S)-malate from fumarate: step 1/1. Its function is as follows. Involved in the TCA cycle. Catalyzes the stereospecific interconversion of fumarate to L-malate. This Thermus thermophilus (strain ATCC BAA-163 / DSM 7039 / HB27) protein is Fumarate hydratase class II.